We begin with the raw amino-acid sequence, 605 residues long: ATP-dependent RNA helicase DBP3 (605 aa).

Residues 1–124 form a disordered region; that stretch reads MSAEELVASP…TPALSKKQQK (124 aa). Over residues 54–66 the composition is skewed to basic residues; it reads KDKKDKKEKKDKK. Residues 104–114 are compositionally biased toward polar residues; it reads PVSTATPTESE. Residues 175–201 carry the Q motif motif; it reads LSIRDLPINSKLQPFLNKFEKPTPIQA. The Helicase ATP-binding domain maps to 204-391; sequence WPALLSKKDV…STFLNNPLRI (188 aa). Position 217-224 (217-224) interacts with ATP; that stretch reads AETGSGKT. Residues 336 to 339 carry the DEAD box motif; that stretch reads DEAD. Positions 424–575 constitute a Helicase C-terminal domain; that stretch reads HLKAHLKVHP…EIPKEMDRFP (152 aa).

The protein belongs to the DEAD box helicase family. DDX5/DBP2 subfamily.

The protein localises to the nucleus. It is found in the nucleolus. It carries out the reaction ATP + H2O = ADP + phosphate + H(+). Functionally, ATP-dependent RNA helicase required for 60S ribosomal subunit synthesis. Involved in efficient pre-rRNA processing, predominantly at site A3, which is necessary for the normal formation of 25S and 5.8S rRNAs. In Cryptococcus neoformans var. neoformans serotype D (strain JEC21 / ATCC MYA-565) (Filobasidiella neoformans), this protein is ATP-dependent RNA helicase DBP3 (DBP3).